The sequence spans 151 residues: SsrA-binding protein (151 aa).

Positions Gly121 to Ala151 are disordered. Over residues Asp126 to Arg142 the composition is skewed to basic and acidic residues.

Belongs to the SmpB family.

It is found in the cytoplasm. Its function is as follows. Required for rescue of stalled ribosomes mediated by trans-translation. Binds to transfer-messenger RNA (tmRNA), required for stable association of tmRNA with ribosomes. tmRNA and SmpB together mimic tRNA shape, replacing the anticodon stem-loop with SmpB. tmRNA is encoded by the ssrA gene; the 2 termini fold to resemble tRNA(Ala) and it encodes a 'tag peptide', a short internal open reading frame. During trans-translation Ala-aminoacylated tmRNA acts like a tRNA, entering the A-site of stalled ribosomes, displacing the stalled mRNA. The ribosome then switches to translate the ORF on the tmRNA; the nascent peptide is terminated with the 'tag peptide' encoded by the tmRNA and targeted for degradation. The ribosome is freed to recommence translation, which seems to be the essential function of trans-translation. The sequence is that of SsrA-binding protein from Chromobacterium violaceum (strain ATCC 12472 / DSM 30191 / JCM 1249 / CCUG 213 / NBRC 12614 / NCIMB 9131 / NCTC 9757 / MK).